The sequence spans 236 residues: 2-C-methyl-D-erythritol 4-phosphate cytidylyltransferase (236 aa).

The protein belongs to the IspD/TarI cytidylyltransferase family. IspD subfamily.

It catalyses the reaction 2-C-methyl-D-erythritol 4-phosphate + CTP + H(+) = 4-CDP-2-C-methyl-D-erythritol + diphosphate. The protein operates within isoprenoid biosynthesis; isopentenyl diphosphate biosynthesis via DXP pathway; isopentenyl diphosphate from 1-deoxy-D-xylulose 5-phosphate: step 2/6. In terms of biological role, catalyzes the formation of 4-diphosphocytidyl-2-C-methyl-D-erythritol from CTP and 2-C-methyl-D-erythritol 4-phosphate (MEP). This chain is 2-C-methyl-D-erythritol 4-phosphate cytidylyltransferase, found in Pseudomonas savastanoi pv. phaseolicola (strain 1448A / Race 6) (Pseudomonas syringae pv. phaseolicola (strain 1448A / Race 6)).